Reading from the N-terminus, the 143-residue chain is Large ribosomal subunit protein uL15 (143 aa).

The segment at 1-52 is disordered; sequence MKLNTLAPAAGSKSAPKRLGRGIGSGLGKTSGKGHKGQKARSGGYHKVGFEG. Gly residues predominate over residues 21–31; sequence RGIGSGLGKTS.

It belongs to the universal ribosomal protein uL15 family. Part of the 50S ribosomal subunit.

Its function is as follows. Binds to the 23S rRNA. The protein is Large ribosomal subunit protein uL15 of Francisella tularensis subsp. novicida (strain U112).